The primary structure comprises 131 residues: Profilin-1 (131 aa).

Belongs to the profilin family. Occurs in many kinds of cells as a complex with monomeric actin in a 1:1 ratio. As to expression, cytoplasmic distribution in hypocotyls. In root nodules, it is found in all cells, but is more abundant in the vascular tissue as well as the endodermis.

The protein localises to the cytoplasm. It is found in the cytoskeleton. In terms of biological role, binds to actin and affects the structure of the cytoskeleton. At high concentrations, profilin prevents the polymerization of actin, whereas it enhances it at low concentrations. By binding to PIP2, it inhibits the formation of IP3 and DG. This is Profilin-1 from Phaseolus vulgaris (Kidney bean).